Consider the following 412-residue polypeptide: Tyrosine--tRNA ligase (412 aa).

Residues 50–59 carry the 'HIGH' region motif; sequence PTGTDIHLGH. A 'KMSKS' region motif is present at residues 244-248; the sequence is KMSKS. Lys-247 serves as a coordination point for ATP. Residues 348–411 form the S4 RNA-binding domain; sequence VKFFYLLSSL…IGKKIIKRFE (64 aa).

It belongs to the class-I aminoacyl-tRNA synthetase family. TyrS type 2 subfamily. In terms of assembly, homodimer.

Its subcellular location is the cytoplasm. It carries out the reaction tRNA(Tyr) + L-tyrosine + ATP = L-tyrosyl-tRNA(Tyr) + AMP + diphosphate + H(+). Catalyzes the attachment of tyrosine to tRNA(Tyr) in a two-step reaction: tyrosine is first activated by ATP to form Tyr-AMP and then transferred to the acceptor end of tRNA(Tyr). This chain is Tyrosine--tRNA ligase, found in Prochlorococcus marinus (strain MIT 9312).